Reading from the N-terminus, the 306-residue chain is MSTTSCRMYENRFPEVDELVVVNVRQIQEMGAYVKLLEYDNIEGMVLLSELSRRRIRSVQKHIRVGRNEVVVVLRVDKEKGYIDLSKRRVSPEDVVKCEERFNKSKAVHSIMRHIAEKHNVPLETMYTTIGWPLYRKYGHAYDAFKLAISNPDHVFEGLEPPKSGVINDLLAQISRRLTPQPIKIRADVEVTCFGYEGINAIKAALKAAEDVHTEEVPIKVKLVAPPLYVLLTNALDKSLGLKKLEEAIGAIEKSITASNGTCTVKMKPKAVSETDELELADLMKKFEKENAEISGDEEDDQSGSE.

Residues 17–88 (DELVVVNVRQ…EKGYIDLSKR (72 aa)) enclose the S1 motif domain. Ser-52 carries the post-translational modification Phosphoserine. Thr-179 carries the post-translational modification Phosphothreonine. Ser-273, Ser-295, Ser-303, and Ser-305 each carry phosphoserine.

Belongs to the eIF-2-alpha family. In terms of assembly, eukaryotic translation initiation factor 2 eIF2 is a heterotrimeric complex composed of an alpha, a beta and a gamma subunit.

It is found in the cytoplasm. It localises to the cytosol. Its function is as follows. eIF-2 functions in the early steps of protein synthesis by forming a ternary complex with GTP and initiator tRNA. This complex binds to a 40S ribosomal subunit, followed by mRNA binding to form a 43S pre-initiation complex. Junction of the 60S ribosomal subunit to form the 80S initiation complex is preceded by hydrolysis of the GTP bound to eIF-2 and release of an eIF-2-GDP binary complex. In order for eIF-2 to recycle and catalyze another round of initiation, the GDP bound to eIF-2 must exchange with GTP by way of a reaction catalyzed by eIF2B. In Schizosaccharomyces pombe (strain 972 / ATCC 24843) (Fission yeast), this protein is Eukaryotic translation initiation factor 2 subunit alpha (tif211).